The primary structure comprises 393 residues: Formate-dependent phosphoribosylglycinamide formyltransferase (393 aa).

N(1)-(5-phospho-beta-D-ribosyl)glycinamide-binding positions include 22 to 23 and glutamate 82; that span reads EL. ATP is bound by residues arginine 114, lysine 155, 160–165, 195–198, and glutamate 203; these read SSGKGQ and EGFI. Residues 119–308 form the ATP-grasp domain; it reads RLAAEELDLP…QFALHARAIL (190 aa). Positions 267 and 279 each coordinate Mg(2+). N(1)-(5-phospho-beta-D-ribosyl)glycinamide is bound by residues aspartate 286, lysine 356, and 363-364; that span reads RR.

The protein belongs to the PurK/PurT family. As to quaternary structure, homodimer.

The catalysed reaction is N(1)-(5-phospho-beta-D-ribosyl)glycinamide + formate + ATP = N(2)-formyl-N(1)-(5-phospho-beta-D-ribosyl)glycinamide + ADP + phosphate + H(+). It functions in the pathway purine metabolism; IMP biosynthesis via de novo pathway; N(2)-formyl-N(1)-(5-phospho-D-ribosyl)glycinamide from N(1)-(5-phospho-D-ribosyl)glycinamide (formate route): step 1/1. Functionally, involved in the de novo purine biosynthesis. Catalyzes the transfer of formate to 5-phospho-ribosyl-glycinamide (GAR), producing 5-phospho-ribosyl-N-formylglycinamide (FGAR). Formate is provided by PurU via hydrolysis of 10-formyl-tetrahydrofolate. The sequence is that of Formate-dependent phosphoribosylglycinamide formyltransferase from Pseudomonas putida (strain ATCC 47054 / DSM 6125 / CFBP 8728 / NCIMB 11950 / KT2440).